Reading from the N-terminus, the 84-residue chain is Cell division topological specificity factor (84 aa).

This sequence belongs to the MinE family.

Its function is as follows. Prevents the cell division inhibition by proteins MinC and MinD at internal division sites while permitting inhibition at polar sites. This ensures cell division at the proper site by restricting the formation of a division septum at the midpoint of the long axis of the cell. The polypeptide is Cell division topological specificity factor (Desulfotalea psychrophila (strain LSv54 / DSM 12343)).